The chain runs to 845 residues: Ribonucleoside-diphosphate reductase subunit alpha (845 aa).

Positions 1-98 constitute an ATP-cone domain; that stretch reads MHIIKRNGEP…LYRDDRTKKR (98 aa). Residues T303, 318–319, G347, 534–538, and 725–729 contribute to the substrate site; these read SC, NLCTE, and PTSST. An intrachain disulfide couples C319 to C574. The active-site Proton acceptor is N534. The active-site Cysteine radical intermediate is C536. E538 functions as the Proton acceptor in the catalytic mechanism.

It belongs to the ribonucleoside diphosphate reductase large chain family. Tetramer of two alpha and two beta subunits.

The enzyme catalyses a 2'-deoxyribonucleoside 5'-diphosphate + [thioredoxin]-disulfide + H2O = a ribonucleoside 5'-diphosphate + [thioredoxin]-dithiol. Under complex allosteric control mediated by deoxynucleoside triphosphates and ATP binding. The type of nucleotide bound at the specificity site determines substrate preference. It seems probable that ATP makes the enzyme reduce CDP and UDP, dGTP favors ADP reduction and dTTP favors GDP reduction. In terms of biological role, provides the precursors necessary for DNA synthesis. Catalyzes the biosynthesis of deoxyribonucleotides from the corresponding ribonucleotides. This Treponema pallidum (strain Nichols) protein is Ribonucleoside-diphosphate reductase subunit alpha (nrdA).